A 151-amino-acid chain; its full sequence is D-aminoacyl-tRNA deacylase (151 aa).

Positions 136–137 (GP) match the Gly-cisPro motif, important for rejection of L-amino acids motif.

This sequence belongs to the DTD family. As to quaternary structure, homodimer.

It is found in the cytoplasm. It carries out the reaction glycyl-tRNA(Ala) + H2O = tRNA(Ala) + glycine + H(+). It catalyses the reaction a D-aminoacyl-tRNA + H2O = a tRNA + a D-alpha-amino acid + H(+). An aminoacyl-tRNA editing enzyme that deacylates mischarged D-aminoacyl-tRNAs. Also deacylates mischarged glycyl-tRNA(Ala), protecting cells against glycine mischarging by AlaRS. Acts via tRNA-based rather than protein-based catalysis; rejects L-amino acids rather than detecting D-amino acids in the active site. By recycling D-aminoacyl-tRNA to D-amino acids and free tRNA molecules, this enzyme counteracts the toxicity associated with the formation of D-aminoacyl-tRNA entities in vivo and helps enforce protein L-homochirality. The protein is D-aminoacyl-tRNA deacylase of Lactococcus lactis subsp. lactis (strain IL1403) (Streptococcus lactis).